The chain runs to 444 residues: Probable D-serine dehydratase (444 aa).

Residue Lys118 is modified to N6-(pyridoxal phosphate)lysine.

The protein belongs to the serine/threonine dehydratase family. DsdA subfamily. Requires pyridoxal 5'-phosphate as cofactor.

The catalysed reaction is D-serine = pyruvate + NH4(+). The protein is Probable D-serine dehydratase of Acinetobacter baumannii (strain AB0057).